Reading from the N-terminus, the 47-residue chain is Delta-stichotoxin-Hcr1d (47 aa).

Cystine bridges form between Cys-3–Cys-43, Cys-5–Cys-33, and Cys-26–Cys-44.

Belongs to the sea anemone sodium channel inhibitory toxin family. Type II subfamily.

It is found in the secreted. The protein localises to the nematocyst. Binds to site 3 of voltage-gated sodium channels and inhibits the inactivation process. This is Delta-stichotoxin-Hcr1d from Radianthus crispa (Leathery sea anemone).